Consider the following 439-residue polypeptide: N5-carboxyaminoimidazole ribonucleotide synthase (439 aa).

ATP contacts are provided by residues Lys113, Lys160, 197 to 200, Glu205, and 283 to 284; these read EERV and NE. The region spanning 117–313 is the ATP-grasp domain; the sequence is RRRLAALGAA…QFEQHLRAVL (197 aa).

This sequence belongs to the PurK/PurT family. In terms of assembly, homodimer.

The catalysed reaction is 5-amino-1-(5-phospho-beta-D-ribosyl)imidazole + hydrogencarbonate + ATP = 5-carboxyamino-1-(5-phospho-D-ribosyl)imidazole + ADP + phosphate + 2 H(+). Its pathway is purine metabolism; IMP biosynthesis via de novo pathway; 5-amino-1-(5-phospho-D-ribosyl)imidazole-4-carboxylate from 5-amino-1-(5-phospho-D-ribosyl)imidazole (N5-CAIR route): step 1/2. Functionally, catalyzes the ATP-dependent conversion of 5-aminoimidazole ribonucleotide (AIR) and HCO(3)(-) to N5-carboxyaminoimidazole ribonucleotide (N5-CAIR). In Mycobacterium leprae (strain TN), this protein is N5-carboxyaminoimidazole ribonucleotide synthase.